The primary structure comprises 56 residues: Ovomucoid (56 aa).

The Kazal-like domain occupies 6–56; that stretch reads VDCSEYPKPDCTLEYRPLCGSDNKTYANKCNFCNAVVESNGTLTLSHFGKC. Disulfide bonds link Cys-8–Cys-38, Cys-16–Cys-35, and Cys-24–Cys-56. The N-linked (GlcNAc...) asparagine glycan is linked to Asn-45.

It localises to the secreted. The polypeptide is Ovomucoid (Callipepla squamata castanogastris (Chestnut bellied scaled quail)).